A 140-amino-acid chain; its full sequence is Nucleoside diphosphate kinase (140 aa).

Residues Lys11, Phe59, Arg87, Thr93, Arg104, and Asn114 each contribute to the ATP site. His117 functions as the Pros-phosphohistidine intermediate in the catalytic mechanism.

The protein belongs to the NDK family. As to quaternary structure, homotetramer. It depends on Mg(2+) as a cofactor.

It is found in the cytoplasm. The enzyme catalyses a 2'-deoxyribonucleoside 5'-diphosphate + ATP = a 2'-deoxyribonucleoside 5'-triphosphate + ADP. The catalysed reaction is a ribonucleoside 5'-diphosphate + ATP = a ribonucleoside 5'-triphosphate + ADP. In terms of biological role, major role in the synthesis of nucleoside triphosphates other than ATP. The ATP gamma phosphate is transferred to the NDP beta phosphate via a ping-pong mechanism, using a phosphorylated active-site intermediate. This chain is Nucleoside diphosphate kinase, found in Rhodospirillum centenum (strain ATCC 51521 / SW).